Reading from the N-terminus, the 230-residue chain is Large ribosomal subunit protein uL1 (230 aa).

This sequence belongs to the universal ribosomal protein uL1 family. Part of the 50S ribosomal subunit.

Functionally, binds directly to 23S rRNA. The L1 stalk is quite mobile in the ribosome, and is involved in E site tRNA release. In terms of biological role, protein L1 is also a translational repressor protein, it controls the translation of the L11 operon by binding to its mRNA. The sequence is that of Large ribosomal subunit protein uL1 from Rhodopseudomonas palustris (strain BisB18).